Here is a 315-residue protein sequence, read N- to C-terminus: tRNA uridine(34) hydroxylase (315 aa).

Residues 145 to 235 (MKNDFILVDM…GIIEYVNFIK (91 aa)) form the Rhodanese domain. Cys199 acts as the Cysteine persulfide intermediate in catalysis.

This sequence belongs to the TrhO family.

It carries out the reaction uridine(34) in tRNA + AH2 + O2 = 5-hydroxyuridine(34) in tRNA + A + H2O. Functionally, catalyzes oxygen-dependent 5-hydroxyuridine (ho5U) modification at position 34 in tRNAs. The protein is tRNA uridine(34) hydroxylase of Wigglesworthia glossinidia brevipalpis.